The sequence spans 270 residues: Glutamate racemase (270 aa).

Substrate contacts are provided by residues 13–14 (DS) and 45–46 (YG). Cys-77 functions as the Proton donor/acceptor in the catalytic mechanism. Residue 78–79 (NT) coordinates substrate. Residue Cys-185 is the Proton donor/acceptor of the active site. Residue 186–187 (TH) participates in substrate binding.

It belongs to the aspartate/glutamate racemases family.

The catalysed reaction is L-glutamate = D-glutamate. The protein operates within cell wall biogenesis; peptidoglycan biosynthesis. Its function is as follows. Provides the (R)-glutamate required for cell wall biosynthesis. The chain is Glutamate racemase from Vibrio parahaemolyticus serotype O3:K6 (strain RIMD 2210633).